We begin with the raw amino-acid sequence, 456 residues long: Adenylosuccinate lyase (456 aa).

N(6)-(1,2-dicarboxyethyl)-AMP contacts are provided by residues 15 to 16 (RY), 90 to 92 (NHD), and 122 to 123 (TS). The active-site Proton donor/acceptor is histidine 171. Glutamine 248 provides a ligand contact to N(6)-(1,2-dicarboxyethyl)-AMP. Serine 296 functions as the Proton donor/acceptor in the catalytic mechanism. N(6)-(1,2-dicarboxyethyl)-AMP-binding positions include serine 297, 302–304 (KVN), asparagine 310, arginine 336, and 341–345 (STVLR).

It belongs to the lyase 1 family. Adenylosuccinate lyase subfamily. As to quaternary structure, homotetramer. Residues from neighboring subunits contribute catalytic and substrate-binding residues to each active site.

The catalysed reaction is N(6)-(1,2-dicarboxyethyl)-AMP = fumarate + AMP. It catalyses the reaction (2S)-2-[5-amino-1-(5-phospho-beta-D-ribosyl)imidazole-4-carboxamido]succinate = 5-amino-1-(5-phospho-beta-D-ribosyl)imidazole-4-carboxamide + fumarate. It functions in the pathway purine metabolism; AMP biosynthesis via de novo pathway; AMP from IMP: step 2/2. The protein operates within purine metabolism; IMP biosynthesis via de novo pathway; 5-amino-1-(5-phospho-D-ribosyl)imidazole-4-carboxamide from 5-amino-1-(5-phospho-D-ribosyl)imidazole-4-carboxylate: step 2/2. Functionally, catalyzes two reactions in de novo purine nucleotide biosynthesis. Catalyzes the breakdown of 5-aminoimidazole- (N-succinylocarboxamide) ribotide (SAICAR or 2-[5-amino-1-(5-phospho-beta-D-ribosyl)imidazole-4-carboxamido]succinate) to 5-aminoimidazole-4-carboxamide ribotide (AICAR or 5-amino-1-(5-phospho-beta-D-ribosyl)imidazole-4-carboxamide) and fumarate, and of adenylosuccinate (ADS or N(6)-(1,2-dicarboxyethyl)-AMP) to adenosine monophosphate (AMP) and fumarate. The polypeptide is Adenylosuccinate lyase (purB) (Pseudomonas aeruginosa (strain ATCC 15692 / DSM 22644 / CIP 104116 / JCM 14847 / LMG 12228 / 1C / PRS 101 / PAO1)).